Consider the following 299-residue polypeptide: MYFFRALLSPVVLWPALVSGKSNSNTANYTVEELWDLEVTFWDNFLYPANVKQVEAINSTLFTTEVQGRVDITRVFNGSELNTEYIFGLFSDPNHLSLVGVPIAYSITQFIAERNIASATTVVTFNATSFGNLLLPVTIDTWIMWDANGRIMQYDATFRWFGFLLDTLVEALATSINGTASQATAALTQLLATTVCDTHDKYCTGENQQYDNSTACYDFLTTAIPLGKDYELGRDTLLCREVHEHMVQYDPKMHCPHIGPTGGDYCVNDQTYEQKVLQKYFNVSWIVGVPWTGNIWLGD.

Residues 1-20 (MYFFRALLSPVVLWPALVSG) form the signal peptide. Residues Asn28, Asn58, Asn77, Asn126, Asn177, Asn212, and Asn282 are each glycosylated (N-linked (GlcNAc...) asparagine).

This sequence belongs to the bfoA family.

Its pathway is secondary metabolite biosynthesis; terpenoid biosynthesis. Acetyltransferase; part of the gene cluster that mediates the biosynthesis of an ophiobolin family sesterterpenoid. Its function is as follows. Sesterterpenoid synthase; part of the gene cluster that mediates the biosynthesis of an ophiobolin family sesterterpenoid. The protein is Ophiobolin family sesterterpenoid biosynthesis cluster acetyltransferase of Aspergillus terreus.